The chain runs to 260 residues: Indole-3-glycerol phosphate synthase (260 aa).

It belongs to the TrpC family.

The catalysed reaction is 1-(2-carboxyphenylamino)-1-deoxy-D-ribulose 5-phosphate + H(+) = (1S,2R)-1-C-(indol-3-yl)glycerol 3-phosphate + CO2 + H2O. Its pathway is amino-acid biosynthesis; L-tryptophan biosynthesis; L-tryptophan from chorismate: step 4/5. The sequence is that of Indole-3-glycerol phosphate synthase from Lactiplantibacillus plantarum (strain ATCC BAA-793 / NCIMB 8826 / WCFS1) (Lactobacillus plantarum).